The chain runs to 503 residues: Aromatase (503 aa).

2 helical membrane passes run 19 to 39 and 303 to 323; these read EAMP…LLVW and MLIA…FLIA. Residues Asp309 and Met374 each contribute to the substrate site. Cys437 provides a ligand contact to heme.

The protein belongs to the cytochrome P450 family. Heme is required as a cofactor. Phosphorylated in vitro by PKA and PKG/PRKG1. These phosphorylations inhibit the catalytic activity as measured by estrone synthesis from androstenedione (36% decrease for PKA and 30% for PKG/PRKG1). Widely expressed, including in adult and fetal brain, placenta, skin fibroblasts, adipose tissue and gonads.

It is found in the endoplasmic reticulum membrane. Its subcellular location is the microsome membrane. The catalysed reaction is testosterone + 3 reduced [NADPH--hemoprotein reductase] + 3 O2 = 17beta-estradiol + formate + 3 oxidized [NADPH--hemoprotein reductase] + 4 H2O + 4 H(+). It carries out the reaction androst-4-ene-3,17-dione + 3 reduced [NADPH--hemoprotein reductase] + 3 O2 = estrone + formate + 3 oxidized [NADPH--hemoprotein reductase] + 4 H2O + 4 H(+). It catalyses the reaction androst-4-ene-3,17-dione + reduced [NADPH--hemoprotein reductase] + O2 = 19-hydroxyandrost-4-ene-3,17-dione + oxidized [NADPH--hemoprotein reductase] + H2O + H(+). The enzyme catalyses 19-hydroxyandrost-4-ene-3,17-dione + reduced [NADPH--hemoprotein reductase] + O2 = 19-oxo-androst-4-ene-3,17-dione + oxidized [NADPH--hemoprotein reductase] + 2 H2O + H(+). The catalysed reaction is 19-oxo-androst-4-ene-3,17-dione + reduced [NADPH--hemoprotein reductase] + O2 = estrone + formate + oxidized [NADPH--hemoprotein reductase] + H2O + 2 H(+). It carries out the reaction estrone + reduced [NADPH--hemoprotein reductase] + O2 = 2-hydroxyestrone + oxidized [NADPH--hemoprotein reductase] + H2O + H(+). It catalyses the reaction 17beta-hydroxy-5alpha-androstan-3-one + reduced [NADPH--hemoprotein reductase] + O2 = 17beta,19-dihydroxy-3-oxo-5alpha-androstanone + oxidized [NADPH--hemoprotein reductase] + H2O + H(+). The enzyme catalyses 17beta,19-dihydroxy-3-oxo-5alpha-androstanone + reduced [NADPH--hemoprotein reductase] + O2 = 17beta-hydroxy-3,19-dioxo-5alpha-androstanone + oxidized [NADPH--hemoprotein reductase] + 2 H2O + H(+). The catalysed reaction is 17beta-hydroxy-3,19-dioxo-5alpha-androstanone + reduced [NADPH--hemoprotein reductase] + O2 = 17beta-hydroxy-3-oxo-19-nor-5alpha-androst-1-ene + formate + oxidized [NADPH--hemoprotein reductase] + H2O + 2 H(+). It participates in steroid hormone biosynthesis. Its function is as follows. A cytochrome P450 monooxygenase that catalyzes the conversion of C19 androgens, androst-4-ene-3,17-dione (androstenedione) and testosterone to the C18 estrogens, estrone and estradiol, respectively. Catalyzes three successive oxidations of C19 androgens: two conventional oxidations at C19 yielding 19-hydroxy and 19-oxo/19-aldehyde derivatives, followed by a third oxidative aromatization step that involves C1-beta hydrogen abstraction combined with cleavage of the C10-C19 bond to yield a phenolic A ring and formic acid. Alternatively, the third oxidative reaction yields a 19-norsteroid and formic acid. Converts dihydrotestosterone to delta1,10-dehydro 19-nordihydrotestosterone and may play a role in homeostasis of this potent androgen. Also displays 2-hydroxylase activity toward estrone. Mechanistically, uses molecular oxygen inserting one oxygen atom into a substrate, and reducing the second into a water molecule, with two electrons provided by NADPH via cytochrome P450 reductase (CPR; NADPH-ferrihemoprotein reductase). The chain is Aromatase from Homo sapiens (Human).